Consider the following 118-residue polypeptide: Basic phospholipase A2 PA-5 (118 aa).

Disulfide bonds link Cys11-Cys71, Cys27-Cys117, Cys29-Cys45, Cys44-Cys98, Cys51-Cys91, Cys60-Cys84, and Cys78-Cys89. Ca(2+) is bound by residues Tyr28, Gly30, and Gly32. His48 is an active-site residue. Asp49 is a binding site for Ca(2+). Residue Asp92 is part of the active site.

The protein belongs to the phospholipase A2 family. Group I subfamily. D49 sub-subfamily. The cofactor is Ca(2+). In terms of tissue distribution, expressed by the venom gland.

It localises to the secreted. The catalysed reaction is a 1,2-diacyl-sn-glycero-3-phosphocholine + H2O = a 1-acyl-sn-glycero-3-phosphocholine + a fatty acid + H(+). In terms of biological role, PLA2 catalyzes the calcium-dependent hydrolysis of the 2-acyl groups in 3-sn-phosphoglycerides. The sequence is that of Basic phospholipase A2 PA-5 from Pseudechis australis (Mulga snake).